Reading from the N-terminus, the 240-residue chain is Thiopurine S-methyltransferase (240 aa).

Residue 24-35 (WKEKWVTRHISF) coordinates S-adenosyl-L-methionine. A Phosphoserine modification is found at serine 34. Phenylalanine 35 is a binding site for substrate. N6-acetyllysine is present on lysine 53. Residues leucine 64, glutamate 85, 129–130 (SI), and arginine 147 each bind S-adenosyl-L-methionine.

It belongs to the class I-like SAM-binding methyltransferase superfamily. TPMT family. In terms of assembly, monomer.

The protein localises to the cytoplasm. It catalyses the reaction S-adenosyl-L-methionine + a thiopurine = S-adenosyl-L-homocysteine + a thiopurine S-methylether.. It carries out the reaction mercaptopurine + S-adenosyl-L-methionine = 6-methylthiopurine + S-adenosyl-L-homocysteine + H(+). Catalyzes the S-methylation of thiopurine drugs such as 6-mercaptopurine (also called mercaptopurine, 6-MP or its brand name Purinethol) using S-adenosyl-L-methionine as the methyl donor. TPMT activity modulates the cytotoxic effects of thiopurine prodrugs. A natural substrate for this enzyme has yet to be identified. The protein is Thiopurine S-methyltransferase (Tpmt) of Mus musculus (Mouse).